Reading from the N-terminus, the 184-residue chain is Effector CFEM1 (184 aa).

A signal peptide spans 1–17 (MKYSVAFVALAAVAAQA). The region spanning 18–112 (QSLADVPKCA…PTTTAAATST (95 aa)) is the CFEM domain. Intrachain disulfides connect C26–C68, C30–C63, C41–C48, and C50–C85. D45 contributes to the heme binding site. Disordered regions lie at residues 83 to 106 (NLCK…PTTT) and 136 to 163 (IIPT…EQAN). Residues 88–103 (PPKESEAKSTAEEEKP) are compositionally biased toward basic and acidic residues. A lipid anchor (GPI-anchor amidated asparagine) is attached at N163. The propeptide at 164 to 184 (GAAGLKGLGALAMAAFAALAL) is removed in mature form.

The protein belongs to the RBT5 family. As to quaternary structure, interacts with Z.mays LRR5; the interaction is direct. Interacts (via CFEM domain) with Z.mays WAK17 isoform 2; the interaction is direct.

Its subcellular location is the secreted. The protein localises to the cell wall. The protein resides in the cell membrane. It is found in the cell septum. It localises to the cytoplasm. Its function is as follows. Suppresses host programmed cell death during infection by binding to Z.mays WAK17 isoform 2 and Z.mays LRR5, to prevent activation of Z.mays WAK17 isoform 1 and the downstream hypersensitive response. This Gibberella zeae (strain ATCC MYA-4620 / CBS 123657 / FGSC 9075 / NRRL 31084 / PH-1) (Wheat head blight fungus) protein is Effector CFEM1.